The following is a 65-amino-acid chain: Small, acid-soluble spore protein Tlp (65 aa).

Belongs to the Tlp family.

The protein localises to the spore core. The sequence is that of Small, acid-soluble spore protein Tlp from Bacillus anthracis (strain A0248).